The primary structure comprises 605 residues: Poly(3-hydroxyalkanoate) polymerase (605 aa).

The AB hydrolase-1 domain maps to 319 to 527; that stretch reads IETAIDMIGV…VLAGSGHIAG (209 aa). Cys341 is an active-site residue.

It belongs to the PHA/PHB synthase family.

The protein localises to the cytoplasm. This chain is Poly(3-hydroxyalkanoate) polymerase (phaC), found in Methylorubrum extorquens (Methylobacterium dichloromethanicum).